An 85-amino-acid polypeptide reads, in one-letter code: UPF0291 protein SEQ_0545 (85 aa).

The disordered stretch occupies residues 62–85 (TPEKLRQVQREKGLHGRSLDDPES).

Belongs to the UPF0291 family.

It is found in the cytoplasm. The chain is UPF0291 protein SEQ_0545 from Streptococcus equi subsp. equi (strain 4047).